The chain runs to 297 residues: MKPQIYHVDAFTGDPFRGNSAGVVLHADTLSDAQMQLIARELRHSETAFLLKSEESDVRIRYFTPTVEVPICGHATVAAHYVRATVLGLGNTTVWQTSLAGRHRVEIHAEHNDYRITLEQGQPSFEPPLVGEIRAAIITALNLTEDDIVPGAPIQVASTGHAKVMILLKPDVDIDALSPNLAALTAISQQIGCNGFFPFQIRPGKNETDGRMFSPAIGIVEDPVTGNANGPMGAWLVHHGLMAHDGKTLQIQGHQGRALGKEGTVDVTVTIRDNQPENVTISGQAVILFHAEWAITF.

Glu-46 is a catalytic residue.

Belongs to the PhzF family. Homodimer and homotetramer.

This is an uncharacterized protein from Salmonella typhimurium (strain LT2 / SGSC1412 / ATCC 700720).